The chain runs to 263 residues: MTMPLYASPEQILRDRSEYARKGISRGRSVVVLRYADGVLFVAENPSSTLHKVSEIYDRIGFAAVGRYSEFENLRQAGIRFADVRGYQNDPRDVTGRSLANVYAQTLGSIFTEQIKPLEVEICVAEVGHTPEHDTLYRLTYDGSIVEEPQHSVMGGQAETTATALKESYEEGLPLAAALRVAVKALSAGSASTGNGKPELLEAANLEAAVLERDRPRRAFRRLKGTALAALLQDTPPDDADADADAGKKPANDGNLPPNDDKS.

The disordered stretch occupies residues 229–263 (AALLQDTPPDDADADADAGKKPANDGNLPPNDDKS).

This sequence belongs to the peptidase T1A family. The 20S proteasome core is composed of 14 alpha and 14 beta subunits that assemble into four stacked heptameric rings, resulting in a barrel-shaped structure. The two inner rings, each composed of seven catalytic beta subunits, are sandwiched by two outer rings, each composed of seven alpha subunits. The catalytic chamber with the active sites is on the inside of the barrel. Has a gated structure, the ends of the cylinder being occluded by the N-termini of the alpha-subunits. Is capped by the proteasome-associated ATPase, ARC.

It localises to the cytoplasm. The protein operates within protein degradation; proteasomal Pup-dependent pathway. The formation of the proteasomal ATPase ARC-20S proteasome complex, likely via the docking of the C-termini of ARC into the intersubunit pockets in the alpha-rings, may trigger opening of the gate for substrate entry. Interconversion between the open-gate and close-gate conformations leads to a dynamic regulation of the 20S proteasome proteolysis activity. Its function is as follows. Component of the proteasome core, a large protease complex with broad specificity involved in protein degradation. This chain is Proteasome subunit alpha, found in Actinosynnema mirum (strain ATCC 29888 / DSM 43827 / JCM 3225 / NBRC 14064 / NCIMB 13271 / NRRL B-12336 / IMRU 3971 / 101).